Consider the following 261-residue polypeptide: Hydroxyethylthiazole kinase (261 aa).

Residue Met-39 participates in substrate binding. ATP-binding residues include Arg-115 and Thr-159. A substrate-binding site is contributed by Gly-186.

The protein belongs to the Thz kinase family. The cofactor is Mg(2+).

The enzyme catalyses 5-(2-hydroxyethyl)-4-methylthiazole + ATP = 4-methyl-5-(2-phosphooxyethyl)-thiazole + ADP + H(+). It participates in cofactor biosynthesis; thiamine diphosphate biosynthesis; 4-methyl-5-(2-phosphoethyl)-thiazole from 5-(2-hydroxyethyl)-4-methylthiazole: step 1/1. Its function is as follows. Catalyzes the phosphorylation of the hydroxyl group of 4-methyl-5-beta-hydroxyethylthiazole (THZ). The polypeptide is Hydroxyethylthiazole kinase (Macrococcus caseolyticus (strain JCSC5402) (Macrococcoides caseolyticum)).